Here is a 354-residue protein sequence, read N- to C-terminus: UDP-N-acetylglucosamine--N-acetylmuramyl-(pentapeptide) pyrophosphoryl-undecaprenol N-acetylglucosamine transferase (354 aa).

UDP-N-acetyl-alpha-D-glucosamine is bound by residues 13 to 15 (SGG), asparagine 125, arginine 161, serine 189, isoleucine 242, 261 to 266 (ALTVSE), and glutamine 286.

It belongs to the glycosyltransferase 28 family. MurG subfamily.

It localises to the cell inner membrane. The enzyme catalyses di-trans,octa-cis-undecaprenyl diphospho-N-acetyl-alpha-D-muramoyl-L-alanyl-D-glutamyl-meso-2,6-diaminopimeloyl-D-alanyl-D-alanine + UDP-N-acetyl-alpha-D-glucosamine = di-trans,octa-cis-undecaprenyl diphospho-[N-acetyl-alpha-D-glucosaminyl-(1-&gt;4)]-N-acetyl-alpha-D-muramoyl-L-alanyl-D-glutamyl-meso-2,6-diaminopimeloyl-D-alanyl-D-alanine + UDP + H(+). The protein operates within cell wall biogenesis; peptidoglycan biosynthesis. Functionally, cell wall formation. Catalyzes the transfer of a GlcNAc subunit on undecaprenyl-pyrophosphoryl-MurNAc-pentapeptide (lipid intermediate I) to form undecaprenyl-pyrophosphoryl-MurNAc-(pentapeptide)GlcNAc (lipid intermediate II). The chain is UDP-N-acetylglucosamine--N-acetylmuramyl-(pentapeptide) pyrophosphoryl-undecaprenol N-acetylglucosamine transferase from Buchnera aphidicola subsp. Schizaphis graminum (strain Sg).